A 159-amino-acid chain; its full sequence is uncharacterized protein (159 aa).

The 150-residue stretch at 4–153 folds into the N-acetyltransferase domain; sequence IKTDDLTHPA…HSRFLSLTLC (150 aa).

Belongs to the acetyltransferase family.

This is an uncharacterized protein from Escherichia coli (strain K12).